The chain runs to 214 residues: MNKRITVLSLLLATSLSSAAAMADDATELRAKLSNIDSLHATFSQQVTDINSKPIQTGSGVFALAYPNQFYWHLTQPDESLIVADGANLWIYNPFAEEVTVMDVAQAVDASPMALLVHRDEATWAKYSVTKRAVSGKSTCFDIQPKKLNSNVVAVSVCFEASQLVKFNLTDEQGNLSQFALTQQRKVKDNEANIFKFAVPDNVDIDDQRLKQAN.

An N-terminal signal peptide occupies residues 1–23; it reads MNKRITVLSLLLATSLSSAAAMA.

Belongs to the LolA family. As to quaternary structure, monomer.

It localises to the periplasm. Participates in the translocation of lipoproteins from the inner membrane to the outer membrane. Only forms a complex with a lipoprotein if the residue after the N-terminal Cys is not an aspartate (The Asp acts as a targeting signal to indicate that the lipoprotein should stay in the inner membrane). This chain is Outer-membrane lipoprotein carrier protein, found in Shewanella frigidimarina (strain NCIMB 400).